We begin with the raw amino-acid sequence, 60 residues long: Ixodegrin-Ip (60 aa).

The first 21 residues, methionine 1 to alanine 21, serve as a signal peptide directing secretion. Positions arginine 49–aspartate 51 match the Cell attachment site motif.

This sequence belongs to the ixodegrin family. Post-translationally, contains 3 disulfide bonds. In terms of tissue distribution, expressed in salivary glands.

It localises to the secreted. Functionally, tick salivary platelet aggregation inhibitor that plays an important part in the anti-hemostatic strategy of ticks. Inhibits platelet aggregation induced by ADP, thrombin and thromboxane A2 (TXA2). Blocks platelet adhesion to soluble collagen (most probably through the binding to alpha-2/beta-1 integrin (ITGA2/ITGB1)) and binds to purified glycoprotein IIb/IIIa (ITGA2B/ITGB3) in a dose-dependent manner. In vivo, reduces thrombus weight effectively in a rat arteriovenous shunt model and inhibits thrombosis in a carrageenan-induced mouse tail thrombosis model. The sequence is that of Ixodegrin-Ip from Ixodes pacificus (Western black-legged tick).